The chain runs to 609 residues: UvrABC system protein C (609 aa).

A GIY-YIG domain is found at 16-94 (SSPGVYRMYD…IKQYMPKYNV (79 aa)). The region spanning 203–238 (QQVTKALVAKMEQAAVELNYEQAARYRDQITALRRV) is the UVR domain.

Belongs to the UvrC family. In terms of assembly, interacts with UvrB in an incision complex.

It is found in the cytoplasm. Functionally, the UvrABC repair system catalyzes the recognition and processing of DNA lesions. UvrC both incises the 5' and 3' sides of the lesion. The N-terminal half is responsible for the 3' incision and the C-terminal half is responsible for the 5' incision. The chain is UvrABC system protein C from Shewanella piezotolerans (strain WP3 / JCM 13877).